Here is a 480-residue protein sequence, read N- to C-terminus: tRNA-2-methylthio-N(6)-dimethylallyladenosine synthase (480 aa).

Residues 31–151 form the MTTase N-terminal domain; that stretch reads RGLHVITWGC…LPEMVARAAR (121 aa). Residues Cys-40, Cys-76, Cys-114, Cys-192, Cys-196, and Cys-199 each coordinate [4Fe-4S] cluster. Residues 178 to 410 form the Radical SAM core domain; the sequence is SPGGITSFLT…QALLRTQQDA (233 aa). Residues 413-475 enclose the TRAM domain; that stretch reads DGTVGHVVPV…TNSLSGTLVQ (63 aa).

Belongs to the methylthiotransferase family. MiaB subfamily. Monomer. [4Fe-4S] cluster is required as a cofactor.

The protein resides in the cytoplasm. The catalysed reaction is N(6)-dimethylallyladenosine(37) in tRNA + (sulfur carrier)-SH + AH2 + 2 S-adenosyl-L-methionine = 2-methylsulfanyl-N(6)-dimethylallyladenosine(37) in tRNA + (sulfur carrier)-H + 5'-deoxyadenosine + L-methionine + A + S-adenosyl-L-homocysteine + 2 H(+). Functionally, catalyzes the methylthiolation of N6-(dimethylallyl)adenosine (i(6)A), leading to the formation of 2-methylthio-N6-(dimethylallyl)adenosine (ms(2)i(6)A) at position 37 in tRNAs that read codons beginning with uridine. The polypeptide is tRNA-2-methylthio-N(6)-dimethylallyladenosine synthase (Gluconacetobacter diazotrophicus (strain ATCC 49037 / DSM 5601 / CCUG 37298 / CIP 103539 / LMG 7603 / PAl5)).